The chain runs to 304 residues: Putative F-box/LRR-repeat protein 21 (304 aa).

In terms of domain architecture, F-box spans 43 to 90; it reads RRNWVDLPPELTTSILLRLSLTDILDNAQKVCKEWRRICKDPSMWRKI. 4 LRR repeats span residues 132–159, 173–198, 218–241, and 243–268; these read LSYI…GVVN, THSC…KLNS, GPLE…HLQL, and ANRL…DVRK.

This Arabidopsis thaliana (Mouse-ear cress) protein is Putative F-box/LRR-repeat protein 21 (FBL21).